The sequence spans 311 residues: Pyrimidine-specific ribonucleoside hydrolase RihA (311 aa).

H240 is an active-site residue.

It belongs to the IUNH family. RihA subfamily.

In terms of biological role, hydrolyzes with equal efficiency cytidine or uridine to ribose and cytosine or uracil, respectively. This chain is Pyrimidine-specific ribonucleoside hydrolase RihA, found in Escherichia coli O139:H28 (strain E24377A / ETEC).